The chain runs to 320 residues: Cytochrome f (320 aa).

A signal peptide spans 1 to 35; the sequence is MQTRNNFSWIKEQITRSISVSLMIYIITRASISNA. 4 residues coordinate heme: tyrosine 36, cysteine 56, cysteine 59, and histidine 60. The chain crosses the membrane as a helical span at residues 286–306; sequence VQGLLFFLASVILAQIFLVLK.

This sequence belongs to the cytochrome f family. As to quaternary structure, the 4 large subunits of the cytochrome b6-f complex are cytochrome b6, subunit IV (17 kDa polypeptide, petD), cytochrome f and the Rieske protein, while the 4 small subunits are PetG, PetL, PetM and PetN. The complex functions as a dimer. The cofactor is heme.

It localises to the plastid. The protein localises to the chloroplast thylakoid membrane. In terms of biological role, component of the cytochrome b6-f complex, which mediates electron transfer between photosystem II (PSII) and photosystem I (PSI), cyclic electron flow around PSI, and state transitions. This is Cytochrome f from Lactuca sativa (Garden lettuce).